Here is a 274-residue protein sequence, read N- to C-terminus: 2,3,4,5-tetrahydropyridine-2,6-dicarboxylate N-succinyltransferase (274 aa).

Positions 106 and 143 each coordinate substrate.

It belongs to the transferase hexapeptide repeat family. In terms of assembly, homotrimer.

The protein localises to the cytoplasm. The catalysed reaction is (S)-2,3,4,5-tetrahydrodipicolinate + succinyl-CoA + H2O = (S)-2-succinylamino-6-oxoheptanedioate + CoA. It participates in amino-acid biosynthesis; L-lysine biosynthesis via DAP pathway; LL-2,6-diaminopimelate from (S)-tetrahydrodipicolinate (succinylase route): step 1/3. The protein is 2,3,4,5-tetrahydropyridine-2,6-dicarboxylate N-succinyltransferase of Acidovorax sp. (strain JS42).